A 226-amino-acid chain; its full sequence is Gap junction beta-2 protein (226 aa).

Residues 2 to 13 (DWGTLQTILGGV) lie within the membrane without spanning it. Residues 14–20 (NKHSTSI) are Cytoplasmic-facing. The chain crosses the membrane as a helical span at residues 21–40 (GKIWLTVLFIFRIMILVVAA). Residues 41–73 (KEVWGDEQADFVCNTLQPGCKNVCYDHYFPISH) lie on the Extracellular side of the membrane. The Ca(2+) site is built by glutamate 42, glycine 45, and glutamate 47. Cystine bridges form between cysteine 53/cysteine 180, cysteine 60/cysteine 174, and cysteine 64/cysteine 169. The chain crosses the membrane as a helical span at residues 74–94 (IRLWALQLIFVSTPALLVAMH). Over 95–135 (VAYRRHEKKRKFIKGEIKSEFKDIEEIKTQKVRIEGSLWWT) the chain is Cytoplasmic. The chain crosses the membrane as a helical span at residues 136–156 (YTSSIFFRVIFEAAFMYVFYV). The Extracellular segment spans residues 157 to 189 (MYDGFSMQRLVKCNAWPCPNTVDCFVSRPTEKT). Residues 190-210 (VFTVFMIAVSGICILLNVTEL) traverse the membrane as a helical segment. Topologically, residues 211–226 (CYLLIRYCSGKSKKPV) are cytoplasmic.

The protein belongs to the connexin family. Beta-type (group I) subfamily. In terms of assembly, a hemichannel or connexon is composed of a hexamer of connexins. A functional gap junction is formed by the apposition of two hemichannels. Forms heteromeric channels with GJB4. Interacts with CNST.

It is found in the cell membrane. It localises to the cell junction. The protein localises to the gap junction. Structural component of gap junctions. Gap junctions are dodecameric channels that connect the cytoplasm of adjoining cells. They are formed by the docking of two hexameric hemichannels, one from each cell membrane. Small molecules and ions diffuse from one cell to a neighboring cell via the central pore. The polypeptide is Gap junction beta-2 protein (GJB2) (Gorilla gorilla gorilla (Western lowland gorilla)).